The sequence spans 263 residues: uncharacterized protein (263 aa).

A signal peptide spans 1–22 (MGYLKRLVLYIVIMVMSVFIIG). The N-palmitoyl cysteine moiety is linked to residue Cys-23. Cys-23 carries S-diacylglycerol cysteine lipidation.

This sequence belongs to the staphylococcal tandem lipoprotein family.

The protein localises to the cell membrane. This is an uncharacterized protein from Staphylococcus aureus (strain N315).